The primary structure comprises 175 residues: Adenine phosphoribosyltransferase (175 aa).

This sequence belongs to the purine/pyrimidine phosphoribosyltransferase family. Homodimer.

It is found in the cytoplasm. It catalyses the reaction AMP + diphosphate = 5-phospho-alpha-D-ribose 1-diphosphate + adenine. It functions in the pathway purine metabolism; AMP biosynthesis via salvage pathway; AMP from adenine: step 1/1. Catalyzes a salvage reaction resulting in the formation of AMP, that is energically less costly than de novo synthesis. The protein is Adenine phosphoribosyltransferase of Francisella tularensis subsp. tularensis (strain WY96-3418).